A 370-amino-acid polypeptide reads, in one-letter code: Cobalt-precorrin-5B C(1)-methyltransferase (370 aa).

The protein belongs to the CbiD family.

It carries out the reaction Co-precorrin-5B + S-adenosyl-L-methionine = Co-precorrin-6A + S-adenosyl-L-homocysteine. It participates in cofactor biosynthesis; adenosylcobalamin biosynthesis; cob(II)yrinate a,c-diamide from sirohydrochlorin (anaerobic route): step 6/10. In terms of biological role, catalyzes the methylation of C-1 in cobalt-precorrin-5B to form cobalt-precorrin-6A. The sequence is that of Cobalt-precorrin-5B C(1)-methyltransferase from Pseudomonas savastanoi pv. phaseolicola (strain 1448A / Race 6) (Pseudomonas syringae pv. phaseolicola (strain 1448A / Race 6)).